The sequence spans 463 residues: MKTTLYQKIFDSHLIYEDKNTTPIIYIDLHLIHEVTSPQAFDGLRLKKRLVRNPLKTFATMDHNVSTISRKISDSKKMAKIQMRTLIKNCKDFNIPLYDLKNINQGIVHVIGPEQGMTLPGMTVVCGDSHTSTHGAFGALAFGIGTSEVEHVFATQTILQNRMKNMRISIYGNIKKNIFSKDIILNIINKIGTSGGTGYVVEFSGSVIKKMSMESRMTICNMAIEMGAKSGIIEPDAITYNYLKNKNFVPKNRSWKEYIRKWNNLKSGPKSFFEQDFSINISHISPQITWGTNPSQVIPINGKIPILKDIQDVNVREDTERSLEYMGLKPGTSLLNIPVDKVFIGSCTNSRIEDLRVVASVVQNKKISDNIEALIVPGSGLVKKQAEKEGLDKIFKNAGFQWRHAGCSMCLGMNEDQLKPYERCASTSNRNFEGRQGPKGRTHLMSPWLAAQTALYGKFVHIA.

3 residues coordinate [4Fe-4S] cluster: Cys-347, Cys-407, and Cys-410.

This sequence belongs to the aconitase/IPM isomerase family. LeuC type 1 subfamily. As to quaternary structure, heterodimer of LeuC and LeuD. The cofactor is [4Fe-4S] cluster.

It catalyses the reaction (2R,3S)-3-isopropylmalate = (2S)-2-isopropylmalate. It participates in amino-acid biosynthesis; L-leucine biosynthesis; L-leucine from 3-methyl-2-oxobutanoate: step 2/4. Catalyzes the isomerization between 2-isopropylmalate and 3-isopropylmalate, via the formation of 2-isopropylmaleate. The polypeptide is 3-isopropylmalate dehydratase large subunit (Buchnera aphidicola subsp. Cinara cedri (strain Cc)).